We begin with the raw amino-acid sequence, 558 residues long: Glucose-6-phosphate isomerase (558 aa).

Alanine 2 bears the N-acetylalanine mark. Lysine 12 is subject to N6-acetyllysine. Residues serine 86 and serine 107 each carry the phosphoserine modification. Residue lysine 142 is modified to N6-acetyllysine. 159 to 160 provides a ligand contact to D-glucose 6-phosphate; that stretch reads GS. Serine 185 bears the Phosphoserine; by CK2 mark. 210-215 provides a ligand contact to D-glucose 6-phosphate; it reads SKTFTT. Residue threonine 250 is modified to Phosphothreonine. Residues glutamine 354, glutamate 358, and histidine 389 each contribute to the D-glucose 6-phosphate site. Glutamate 358 serves as the catalytic Proton donor. The active site involves histidine 389. Lysine 454 is modified (N6-acetyllysine; alternate). Lysine 454 is subject to N6-malonyllysine; alternate. Lysine 454 is modified (N6-succinyllysine; alternate). Residue serine 455 is modified to Phosphoserine. Lysine 519 serves as a coordination point for D-glucose 6-phosphate. The active site involves lysine 519.

The protein belongs to the GPI family. As to quaternary structure, homodimer; in the catalytically active form. Monomer in the secreted form. In terms of processing, phosphorylation at Ser-185 by CK2 has been shown to decrease enzymatic activity and may contribute to secretion by a non-classical secretory pathway. Post-translationally, ISGylated.

Its subcellular location is the cytoplasm. The protein resides in the secreted. It carries out the reaction alpha-D-glucose 6-phosphate = beta-D-fructose 6-phosphate. Its pathway is carbohydrate degradation; glycolysis; D-glyceraldehyde 3-phosphate and glycerone phosphate from D-glucose: step 2/4. In the cytoplasm, catalyzes the conversion of glucose-6-phosphate to fructose-6-phosphate, the second step in glycolysis, and the reverse reaction during gluconeogenesis. Besides it's role as a glycolytic enzyme, also acts as a secreted cytokine: acts as an angiogenic factor (AMF) that stimulates endothelial cell motility. Acts as a neurotrophic factor, neuroleukin, for spinal and sensory neurons. It is secreted by lectin-stimulated T-cells and induces immunoglobulin secretion. This is Glucose-6-phosphate isomerase from Rattus norvegicus (Rat).